The chain runs to 708 residues: Serine/threonine-protein kinase Nek5 (708 aa).

In terms of domain architecture, Protein kinase spans 4–259; that stretch reads YDVIKAIGQG…INSILKRPFL (256 aa). Residues 10–18 and Lys-33 each bind ATP; that span reads IGQGAFGKA. Residue Asp-128 is the Proton acceptor of the active site. Disordered stretches follow at residues 376–403 and 423–454; these read SYHP…PSQW and KQLG…FQEL. A compositionally biased stretch (basic and acidic residues) spans 440–454; that stretch reads QELRSNGEEPRFQEL.

It belongs to the protein kinase superfamily. NEK Ser/Thr protein kinase family. NIMA subfamily. It depends on Mg(2+) as a cofactor.

Its subcellular location is the cell projection. It is found in the cilium. The protein resides in the flagellum. The catalysed reaction is L-seryl-[protein] + ATP = O-phospho-L-seryl-[protein] + ADP + H(+). The enzyme catalyses L-threonyl-[protein] + ATP = O-phospho-L-threonyl-[protein] + ADP + H(+). The protein is Serine/threonine-protein kinase Nek5 (NEK5) of Homo sapiens (Human).